A 131-amino-acid chain; its full sequence is Small ribosomal subunit protein uS11 (131 aa).

The protein belongs to the universal ribosomal protein uS11 family. As to quaternary structure, part of the 30S ribosomal subunit. Interacts with proteins S7 and S18. Binds to IF-3.

Functionally, located on the platform of the 30S subunit, it bridges several disparate RNA helices of the 16S rRNA. Forms part of the Shine-Dalgarno cleft in the 70S ribosome. This is Small ribosomal subunit protein uS11 from Exiguobacterium sp. (strain ATCC BAA-1283 / AT1b).